Here is a 543-residue protein sequence, read N- to C-terminus: Tubby-related protein 1 (543 aa).

The segment at 1–290 is disordered; it reads MPLQEETLRE…RASSPPVEVG (290 aa). Basic and acidic residues-rich tracts occupy residues 46–56 and 86–99; these read PETPDSLESKP and FLRDPEAKKRDPRE. Composition is skewed to acidic residues over residues 110–132 and 244–255; these read GGEENSEEDSDDDDNDDDEEEEE and KKEEEEEVEEEV. Positions 267–276 are enriched in basic residues; it reads GRAKGKGKKK.

The protein belongs to the TUB family. Homodimer. May interact with ABCF1, PSIP1, ZEB1 and HMGB2 (Potential). Interacts with F-actin. Interacts with DNM1. Interacts with TUB. Interacts with TYRO3. In terms of tissue distribution, retina specific. Detected in the outer plexiform layer in photoreceptor cells (at protein level).

It is found in the cytoplasm. The protein localises to the cell membrane. The protein resides in the secreted. It localises to the synapse. Its function is as follows. Required for normal development of photoreceptor synapses. Required for normal photoreceptor function and for long-term survival of photoreceptor cells. Interacts with cytoskeleton proteins and may play a role in protein transport in photoreceptor cells. Binds lipids, especially phosphatidylinositol 3-phosphate, phosphatidylinositol 4-phosphate, phosphatidylinositol 5-phosphate, phosphatidylinositol 3,4-bisphosphate, phosphatidylinositol 4,5-bisphosphate, phosphatidylinositol 3,4,5-bisphosphate, phosphatidylserine and phosphatidic acid (in vitro). Contribute to stimulation of phagocytosis of apoptotic retinal pigment epithelium (RPE) cells and macrophages. The sequence is that of Tubby-related protein 1 (Tulp1) from Mus musculus (Mouse).